The following is a 1367-amino-acid chain: DNA polymerase III PolC-type (1367 aa).

The Exonuclease domain occupies 358–513 (FVVLDFETTG…DDARVTAQVF (156 aa)).

Belongs to the DNA polymerase type-C family. PolC subfamily.

It is found in the cytoplasm. It carries out the reaction DNA(n) + a 2'-deoxyribonucleoside 5'-triphosphate = DNA(n+1) + diphosphate. Functionally, required for replicative DNA synthesis. This DNA polymerase also exhibits 3' to 5' exonuclease activity. The chain is DNA polymerase III PolC-type from Thermotoga maritima (strain ATCC 43589 / DSM 3109 / JCM 10099 / NBRC 100826 / MSB8).